The primary structure comprises 309 residues: Olfactory receptor 2G3 (309 aa).

Over Met1 to Ala25 the chain is Extracellular. Residue Asn5 is glycosylated (N-linked (GlcNAc...) asparagine). The helical transmembrane segment at Val26 to Ser49 threads the bilayer. Residues Tyr50–Thr57 lie on the Cytoplasmic side of the membrane. Residues Pro58–Pro79 form a helical membrane-spanning segment. Topologically, residues Gln80–Gln100 are extracellular. A disulfide bridge connects residues Cys97 and Cys189. The chain crosses the membrane as a helical span at residues Leu101–Leu120. Residues Asp121–Arg139 are Cytoplasmic-facing. A helical transmembrane segment spans residues Leu140–Ile158. Over His159–Asn195 the chain is Extracellular. The helical transmembrane segment at Glu196 to Gly219 threads the bilayer. Residues Phe220–Lys236 lie on the Cytoplasmic side of the membrane. A helical transmembrane segment spans residues Ala237–Tyr259. The Extracellular segment spans residues Leu260–Lys272. The helical transmembrane segment at Phe273–Leu292 threads the bilayer. The Cytoplasmic portion of the chain corresponds to Arg293 to Leu309.

The protein belongs to the G-protein coupled receptor 1 family.

Its subcellular location is the cell membrane. Odorant receptor. This is Olfactory receptor 2G3 (OR2G3) from Homo sapiens (Human).